An 84-amino-acid polypeptide reads, in one-letter code: Small ribosomal subunit protein bS20 (84 aa).

It belongs to the bacterial ribosomal protein bS20 family.

Its function is as follows. Binds directly to 16S ribosomal RNA. In Lacticaseibacillus casei (strain BL23) (Lactobacillus casei), this protein is Small ribosomal subunit protein bS20.